A 189-amino-acid polypeptide reads, in one-letter code: dCTP deaminase, dUMP-forming (189 aa).

DCTP contacts are provided by residues 101 to 106, Asp-119, 127 to 129, Gln-148, Tyr-162, and Gln-174; these read KSSLGR and TLE. Glu-129 serves as the catalytic Proton donor/acceptor. Residues 166 to 189 are disordered; sequence AVGSKYQGQRGPTPSRSHLNFIKS. The span at 171–189 shows a compositional bias: polar residues; it reads YQGQRGPTPSRSHLNFIKS.

The protein belongs to the dCTP deaminase family. Homotrimer.

It catalyses the reaction dCTP + 2 H2O = dUMP + NH4(+) + diphosphate. It participates in pyrimidine metabolism; dUMP biosynthesis; dUMP from dCTP: step 1/1. Its function is as follows. Bifunctional enzyme that catalyzes both the deamination of dCTP to dUTP and the hydrolysis of dUTP to dUMP without releasing the toxic dUTP intermediate. The sequence is that of dCTP deaminase, dUMP-forming from Mycolicibacterium smegmatis (strain ATCC 700084 / mc(2)155) (Mycobacterium smegmatis).